The sequence spans 259 residues: Bidirectional sugar transporter SWEET6a (259 aa).

Residues 1 to 9 are Extracellular-facing; sequence MISPDAARN. A helical transmembrane segment spans residues 10 to 30; that stretch reads VVGIIGNVISFGLFLAPVPTF. The region spanning 10–98 is the MtN3/slv 1 domain; that stretch reads VVGIIGNVIS…IFFLYSPNKK (89 aa). The Cytoplasmic portion of the chain corresponds to 31-45; the sequence is WRICKRKDVEEFKAD. Residues 46–66 traverse the membrane as a helical segment; the sequence is PYLATLLNCMLWVFYGIPVVH. At 67 to 69 the chain is on the extracellular side; sequence PNS. The helical transmembrane segment at 70–90 threads the bilayer; that stretch reads ILVVTINGIGLLVEGTYLLIF. The Cytoplasmic segment spans residues 91–103; sequence FLYSPNKKRLRMC. Residues 104-124 form a helical membrane-spanning segment; sequence AVLGVELVFMLAVILGVLLGA. The Extracellular portion of the chain corresponds to 125–131; the sequence is HTHEKRS. A helical membrane pass occupies residues 132 to 152; sequence MIVGILCVFFGSIMYFSPLTI. Residues 133–216 form the MtN3/slv 2 domain; the sequence is IVGILCVFFG…LILYACYYRT (84 aa). Residues 153–165 lie on the Cytoplasmic side of the membrane; the sequence is MGKVIKTKSVEYM. Residues 166–186 traverse the membrane as a helical segment; the sequence is PFFLSLVCFLNGVCWTAYALI. The Extracellular segment spans residues 187–189; that stretch reads RFD. A helical membrane pass occupies residues 190–210; the sequence is IYVTIPNGLGALFGAIQLILY. At 211–259 the chain is on the cytoplasmic side; it reads ACYYRTTPKKTKAAKDVEMPSVVVSGTGAAAAAGGGNTGGGSISVTVER.

The protein belongs to the SWEET sugar transporter family. As to quaternary structure, forms homooligomers and/or heterooligomers.

It localises to the cell membrane. In terms of biological role, mediates both low-affinity uptake and efflux of sugar across the plasma membrane. The sequence is that of Bidirectional sugar transporter SWEET6a (SWEET6A) from Oryza sativa subsp. indica (Rice).